We begin with the raw amino-acid sequence, 398 residues long: Bifunctional enzyme IspD/IspF (398 aa).

The segment at 1–234 (MPSSKRTAAI…ARLAAALGDI (234 aa)) is 2-C-methyl-D-erythritol 4-phosphate cytidylyltransferase. Positions 235 to 398 (RTGTGYDVHA…LPWNDKGRDT (164 aa)) are 2-C-methyl-D-erythritol 2,4-cyclodiphosphate synthase. The a divalent metal cation site is built by Asp241 and His243. Residues 241 to 243 (DVH) and 267 to 268 (HS) contribute to the 4-CDP-2-C-methyl-D-erythritol 2-phosphate site. His275 is a binding site for a divalent metal cation. Residues 289–291 (DIG), 365–368 (TTSE), Phe372, and Arg375 each bind 4-CDP-2-C-methyl-D-erythritol 2-phosphate.

This sequence in the N-terminal section; belongs to the IspD/TarI cytidylyltransferase family. IspD subfamily. In the C-terminal section; belongs to the IspF family. It depends on a divalent metal cation as a cofactor.

It catalyses the reaction 2-C-methyl-D-erythritol 4-phosphate + CTP + H(+) = 4-CDP-2-C-methyl-D-erythritol + diphosphate. It carries out the reaction 4-CDP-2-C-methyl-D-erythritol 2-phosphate = 2-C-methyl-D-erythritol 2,4-cyclic diphosphate + CMP. The protein operates within isoprenoid biosynthesis; isopentenyl diphosphate biosynthesis via DXP pathway; isopentenyl diphosphate from 1-deoxy-D-xylulose 5-phosphate: step 2/6. It functions in the pathway isoprenoid biosynthesis; isopentenyl diphosphate biosynthesis via DXP pathway; isopentenyl diphosphate from 1-deoxy-D-xylulose 5-phosphate: step 4/6. Its function is as follows. Bifunctional enzyme that catalyzes the formation of 4-diphosphocytidyl-2-C-methyl-D-erythritol from CTP and 2-C-methyl-D-erythritol 4-phosphate (MEP) (IspD), and catalyzes the conversion of 4-diphosphocytidyl-2-C-methyl-D-erythritol 2-phosphate (CDP-ME2P) to 2-C-methyl-D-erythritol 2,4-cyclodiphosphate (ME-CPP) with a corresponding release of cytidine 5-monophosphate (CMP) (IspF). This chain is Bifunctional enzyme IspD/IspF, found in Nitrobacter winogradskyi (strain ATCC 25391 / DSM 10237 / CIP 104748 / NCIMB 11846 / Nb-255).